We begin with the raw amino-acid sequence, 287 residues long: Small ribosomal subunit biogenesis GTPase RsgA (287 aa).

The CP-type G domain maps to 61–218; sequence ISQLKRPAVA…MVDTPGFSSL (158 aa). Residues 110–113 and 161–169 each bind GTP; these read NKLD and GPSGVGKST. Zn(2+) is bound by residues C242, C247, H249, and C255.

This sequence belongs to the TRAFAC class YlqF/YawG GTPase family. RsgA subfamily. In terms of assembly, monomer. Associates with 30S ribosomal subunit, binds 16S rRNA. Zn(2+) is required as a cofactor.

The protein localises to the cytoplasm. In terms of biological role, one of several proteins that assist in the late maturation steps of the functional core of the 30S ribosomal subunit. Helps release RbfA from mature subunits. May play a role in the assembly of ribosomal proteins into the subunit. Circularly permuted GTPase that catalyzes slow GTP hydrolysis, GTPase activity is stimulated by the 30S ribosomal subunit. In Clostridium kluyveri (strain NBRC 12016), this protein is Small ribosomal subunit biogenesis GTPase RsgA.